Consider the following 124-residue polypeptide: MADLTKLVDELSSLTVLEAAELAKLLEEKWGVSAAAAVAVAAAPAGAAAAAVEEQTEFTVVLAAAGEKKIEVIKEVRAITGLGLKEAKDLVEGAPKPVKEAVSKDEAEKLKAQLEKAGAKVELK.

The protein belongs to the bacterial ribosomal protein bL12 family. Homodimer. Part of the ribosomal stalk of the 50S ribosomal subunit. Forms a multimeric L10(L12)X complex, where L10 forms an elongated spine to which 2 to 4 L12 dimers bind in a sequential fashion. Binds GTP-bound translation factors.

In terms of biological role, forms part of the ribosomal stalk which helps the ribosome interact with GTP-bound translation factors. Is thus essential for accurate translation. This chain is Large ribosomal subunit protein bL12, found in Xanthobacter autotrophicus (strain ATCC BAA-1158 / Py2).